The sequence spans 35 residues: Photosystem II reaction center protein Psb30 (35 aa).

A helical membrane pass occupies residues 6–26 (VIVQLVFLALIITTGPVIIVY).

Belongs to the Psb30/Ycf12 family. PSII is composed of 1 copy each of membrane proteins PsbA, PsbB, PsbC, PsbD, PsbE, PsbF, PsbH, PsbI, PsbJ, PsbK, PsbL, PsbM, PsbT, PsbY, PsbZ, Psb30/Ycf12, peripheral proteins of the oxygen-evolving complex and a large number of cofactors. It forms dimeric complexes.

It localises to the plastid. It is found in the chloroplast thylakoid membrane. A core subunit of photosystem II (PSII), probably helps stabilize the reaction center. This Cyanidium caldarium (Red alga) protein is Photosystem II reaction center protein Psb30.